Consider the following 195-residue polypeptide: 3-isopropylmalate dehydratase small subunit (195 aa).

The protein belongs to the LeuD family. LeuD type 1 subfamily. Heterodimer of LeuC and LeuD.

The enzyme catalyses (2R,3S)-3-isopropylmalate = (2S)-2-isopropylmalate. The protein operates within amino-acid biosynthesis; L-leucine biosynthesis; L-leucine from 3-methyl-2-oxobutanoate: step 2/4. In terms of biological role, catalyzes the isomerization between 2-isopropylmalate and 3-isopropylmalate, via the formation of 2-isopropylmaleate. This is 3-isopropylmalate dehydratase small subunit from Frankia casuarinae (strain DSM 45818 / CECT 9043 / HFP020203 / CcI3).